The chain runs to 296 residues: Acetylglutamate kinase (296 aa).

Residues 66–67, Arg-88, and Asn-191 each bind substrate; that span reads GG.

This sequence belongs to the acetylglutamate kinase family. ArgB subfamily.

It localises to the cytoplasm. It carries out the reaction N-acetyl-L-glutamate + ATP = N-acetyl-L-glutamyl 5-phosphate + ADP. It participates in amino-acid biosynthesis; L-arginine biosynthesis; N(2)-acetyl-L-ornithine from L-glutamate: step 2/4. In terms of biological role, catalyzes the ATP-dependent phosphorylation of N-acetyl-L-glutamate. The sequence is that of Acetylglutamate kinase from Lawsonia intracellularis (strain PHE/MN1-00).